A 738-amino-acid chain; its full sequence is Flowering time control protein FCA (738 aa).

Residues 1-118 (MHRGGDRSTD…RGDHSDHDNR (118 aa)) are disordered. Composition is skewed to gly residues over residues 52 to 70 (RGGG…GGGR) and 81 to 98 (SGGG…GEPG). Residues 109–118 (RGDHSDHDNR) show a composition bias toward basic and acidic residues. RRM domains are found at residues 122-203 (VKLF…YADG) and 213-293 (HKLF…FADP). 2 disordered regions span residues 292–414 (DPKR…GHHL) and 566–594 (QQSN…AIIP). Residues 301–311 (SRGGPAFGGPG) are compositionally biased toward gly residues. Polar residues predominate over residues 342-358 (HPSSPRSAPHQFNNFGS). Residues 368–377 (TVTSTTDTAT) are compositionally biased toward low complexity. 2 stretches are compositionally biased toward polar residues: residues 383-401 (FSGN…SSHM) and 575-594 (PTQG…AIIP). The region spanning 609-642 (VPLTCNWTEHTSPEGFKYYYNSITRESKWDKPEE) is the WW domain. Residues 670 to 738 (MQQLQSPPQA…QSAQERAWKS (69 aa)) form a disordered region. Residues 683–706 (PAMQPVQQIPQAQQGQQQMQMKQQ) show a composition bias toward low complexity. A compositionally biased stretch (polar residues) spans 723 to 732 (RIQQGIQSAQ).

In terms of assembly, interacts with FY. Binds to SF1, FIK, RPRD1B, Os09g0509000/LOC_Os09g33480 and MADS8. In terms of tissue distribution, mostly expressed in young flowers (panicles) and stems, and also present in young seedlings leaves and roots.

It is found in the nucleus. In terms of biological role, plays a major role in the promotion of the transition of the vegetative meristem to reproductive development. Required for RNA-mediated chromatin silencing of a range of loci in the genome. Cotranscriptionally recognizes aberrant RNA and marks it for silencing. Controls alternative cleavage and polyadenylation on pre-mRNAs and antisense RNAs. Regulates flowering time, seed size and cell volume, probably via the modulation of cell size. The protein is Flowering time control protein FCA of Oryza sativa subsp. japonica (Rice).